Consider the following 574-residue polypeptide: Serine/arginine repetitive matrix protein 4 (574 aa).

Disordered stretches follow at residues 45–217, 257–291, 366–422, 454–508, and 526–574; these read LETP…HGGD, IVQN…ITRS, DLIS…SYSL, YCSS…VSSR, and RSRS…RARR. Residues 51-72 show a composition bias toward basic and acidic residues; sequence PKDDEEKVKAKDLVTKTHEKNG. Composition is skewed to basic residues over residues 73 to 88, 102 to 120, and 128 to 184; these read HIKR…RRAR, PKTK…RHRS, and VRKK…HRKA. The segment covering 194–217 has biased composition (basic and acidic residues); that stretch reads NRSEDCEKSGFRDGGRSSDVHGGD. The span at 275–289 shows a compositional bias: polar residues; it reads GNDTSSPPSSKTGIT. A compositionally biased stretch (basic and acidic residues) spans 366–385; that stretch reads DLISDRNRSPSHDRYEDGTR. Residues 405 to 422 show a composition bias toward low complexity; the sequence is RSLSSGRRSYSRSSSYSL. Over residues 454 to 477 the composition is skewed to basic residues; it reads YCSSCKSRKHSRRRPSSPMRKRRR. The span at 478-487 shows a compositional bias: basic and acidic residues; that stretch reads DSPSHLEARR. Low complexity predominate over residues 496-508; sequence IPYYRPSPSVSSR. A compositionally biased stretch (basic residues) spans 526-539; the sequence is RSRSCSRSRSRSHS. The span at 540–559 shows a compositional bias: low complexity; that stretch reads HTYSSYRSYSRSSSWNSLYS. Residues 560 to 574 show a composition bias toward basic residues; that stretch reads RRSRSRSRSYSRARR.

Belongs to the nSR100 family.

It localises to the nucleus. Functionally, splicing factor specifically required for neural cell differentiation. Acts in conjunction with nPTB/PTBP2 by binding directly to its regulated target transcripts and promotes neural-specific exon inclusion in many genes that function in neural cell differentiation. Required to promote the inclusion of neural-specific exon 10 in nPTB/PTBP2, leading to increased expression of neural-specific nPTB/PTBP2. The chain is Serine/arginine repetitive matrix protein 4 (srrm4) from Danio rerio (Zebrafish).